Consider the following 662-residue polypeptide: MDSSTLSPLTTSTAAPLESYERIRNAADISVIVIYFLVVMAVGLWAMFSTNRGTVGGFFLAGRSMVWWPIGASLFASNIGSGHFVGLAGTGAASGIATGGFEWNALIMVVVLGWVFVPIYIRAGVVTMPEYLQKRFGGKRIQIYLSILSLLLYIFTKISADIFSGAIFIQLTLGLDIYVAIIILLVITGLYTITGGLAAVIYTDTLQTAIMMVGSVILTGFAFHEVGGYEAFTEKYMRAIPSQISYGNTSIPQKCYTPREDAFHIFRDAITGDIPWPGLVFGMSILTLWYWCTDQVIVQRCLSAKNLSHVKAGCILCGYLKVMPMFLIVMMGMVSRILYTDKVACVVPSECERYCGTRVGCTNIAFPTLVVELMPNGLRGLMLSVMMASLMSSLTSIFNSASTLFTMDIYTKIRKKASEKELMIAGRLFMLFLIGISIAWVPIVQSAQSGQLFDYIQSITSYLGPPIAAVFLLAIFWKRVNEPGAFWGLVLGFLIGISRMITEFAYGTGSCMEPSNCPTIICGVHYLYFAIILFVISIITVVVVSLFTKPIPDVHLYRLCWSLRNSKEERIDLDAGEEDIQEAPEEATDTEVPKKKKGFFRRAYDLFCGLDQDKGPKMTKEEEAAMKLKLTDTSEHPLWRTVVNINGVILLAVAVFCYAYFA.

Over 1–24 (MDSSTLSPLTTSTAAPLESYERIR) the chain is Extracellular. The chain crosses the membrane as a helical span at residues 25 to 47 (NAADISVIVIYFLVVMAVGLWAM). Over 48 to 66 (FSTNRGTVGGFFLAGRSMV) the chain is Cytoplasmic. Residues 67–90 (WWPIGASLFASNIGSGHFVGLAGT) traverse the membrane as a helical segment. The Extracellular segment spans residues 91–95 (GAASG). The chain crosses the membrane as a helical span at residues 96-117 (IATGGFEWNALIMVVVLGWVFV). Over 118–139 (PIYIRAGVVTMPEYLQKRFGGK) the chain is Cytoplasmic. The helical transmembrane segment at 140–169 (RIQIYLSILSLLLYIFTKISADIFSGAIFI) threads the bilayer. The Extracellular segment spans residues 170 to 176 (QLTLGLD). Residues 177–193 (IYVAIIILLVITGLYTI) form a helical membrane-spanning segment. The Cytoplasmic segment spans residues 194–202 (TGGLAAVIY). A helical transmembrane segment spans residues 203-221 (TDTLQTAIMMVGSVILTGF). The Extracellular portion of the chain corresponds to 222-275 (AFHEVGGYEAFTEKYMRAIPSQISYGNTSIPQKCYTPREDAFHIFRDAITGDIP). Residue N248 is glycosylated (N-linked (GlcNAc...) asparagine). 5 cysteine pairs are disulfide-bonded: C255-C511, C255-C608, C345-C351, C355-C361, and C517-C522. A helical membrane pass occupies residues 276–295 (WPGLVFGMSILTLWYWCTDQ). The Cytoplasmic segment spans residues 296–309 (VIVQRCLSAKNLSH). A helical transmembrane segment spans residues 310–331 (VKAGCILCGYLKVMPMFLIVMM). The Extracellular segment spans residues 332-375 (GMVSRILYTDKVACVVPSECERYCGTRVGCTNIAFPTLVVELMP). The helical transmembrane segment at 376–406 (NGLRGLMLSVMMASLMSSLTSIFNSASTLFT) threads the bilayer. The Cytoplasmic portion of the chain corresponds to 407–422 (MDIYTKIRKKASEKEL). A helical membrane pass occupies residues 423–444 (MIAGRLFMLFLIGISIAWVPIV). The Extracellular portion of the chain corresponds to 445-451 (QSAQSGQ). The helical transmembrane segment at 452 to 477 (LFDYIQSITSYLGPPIAAVFLLAIFW) threads the bilayer. D-glucose is bound at residue Q457. The Cytoplasmic segment spans residues 478 to 481 (KRVN). The helical transmembrane segment at 482–504 (EPGAFWGLVLGFLIGISRMITEF) threads the bilayer. At 505 to 525 (AYGTGSCMEPSNCPTIICGVH) the chain is on the extracellular side. A helical transmembrane segment spans residues 526 to 547 (YLYFAIILFVISIITVVVVSLF). Over 548–642 (TKPIPDVHLY…TSEHPLWRTV (95 aa)) the chain is Cytoplasmic. The helical transmembrane segment at 643–660 (VNINGVILLAVAVFCYAY) threads the bilayer. At 661–662 (FA) the chain is on the extracellular side.

This sequence belongs to the sodium:solute symporter (SSF) (TC 2.A.21) family. Post-translationally, N-glycosylation is not necessary for the cotransporter function. As to expression, found predominantly in intestine, renal cortex and in outer renal medulla.

The protein localises to the apical cell membrane. It carries out the reaction D-glucose(out) + 2 Na(+)(out) = D-glucose(in) + 2 Na(+)(in). The catalysed reaction is D-galactose(out) + 2 Na(+)(out) = D-galactose(in) + 2 Na(+)(in). With respect to regulation, enhanced by the interaction with PDZK1IP1/MAP17; but unlike SLC5A2/SGLT2, PDZK1IP1 is not essential for SLC5A1 transporter activity. Possibly modulated by cholesterol binding. Functionally, electrogenic Na(+)-coupled sugar symporter that actively transports D-glucose or D-galactose at the plasma membrane, with a Na(+) to sugar coupling ratio of 2:1. Transporter activity is driven by a transmembrane Na(+) electrochemical gradient set by the Na(+)/K(+) pump. Has a primary role in the transport of dietary monosaccharides from enterocytes to blood. Responsible for the absorption of D-glucose or D-galactose across the apical brush-border membrane of enterocytes, whereas basolateral exit is provided by GLUT2. Additionally, functions as a D-glucose sensor in enteroendocrine cells, triggering the secretion of the incretins GCG and GIP that control food intake and energy homeostasis. Together with SGLT2, functions in reabsorption of D-glucose from glomerular filtrate, playing a nonredundant role in the S3 segment of the proximal tubules. Transports D-glucose into endometrial epithelial cells, controlling glycogen synthesis and nutritional support for the embryo as well as the decidual transformation of endometrium prior to conception. Acts as a water channel enabling passive water transport in response to the osmotic gradient created upon sugar and Na(+) uptake. Has high water conductivity comparable to aquaporins and therefore is expected to play an important role in transepithelial water permeability, especially in the small intestine. In Oryctolagus cuniculus (Rabbit), this protein is Sodium/glucose cotransporter 1 (SLC5A1).